Here is a 33-residue protein sequence, read N- to C-terminus: Cytochrome b6-f complex subunit 8 (33 aa).

A helical membrane pass occupies residues 2 to 22; sequence LFTVAWASLAAMFSFSIAMVV.

The protein belongs to the PetN family. As to quaternary structure, the 4 large subunits of the cytochrome b6-f complex are cytochrome b6, subunit IV (17 kDa polypeptide, PetD), cytochrome f and the Rieske protein, while the 4 small subunits are PetG, PetL, PetM and PetN. The complex functions as a dimer.

It is found in the cellular thylakoid membrane. In terms of biological role, component of the cytochrome b6-f complex, which mediates electron transfer between photosystem II (PSII) and photosystem I (PSI), cyclic electron flow around PSI, and state transitions. This Synechococcus sp. (strain CC9902) protein is Cytochrome b6-f complex subunit 8.